The chain runs to 219 residues: Large ribosomal subunit protein eL13 (219 aa).

The segment at K198–T219 is disordered.

The protein belongs to the eukaryotic ribosomal protein eL13 family. In terms of assembly, component of the 60S large ribosomal subunit (LSU).

It is found in the cytoplasm. Component of the ribosome, a large ribonucleoprotein complex responsible for the synthesis of proteins in the cell. The small ribosomal subunit (SSU) binds messenger RNAs (mRNAs) and translates the encoded message by selecting cognate aminoacyl-transfer RNA (tRNA) molecules. The large subunit (LSU) contains the ribosomal catalytic site termed the peptidyl transferase center (PTC), which catalyzes the formation of peptide bonds, thereby polymerizing the amino acids delivered by tRNAs into a polypeptide chain. The nascent polypeptides leave the ribosome through a tunnel in the LSU and interact with protein factors that function in enzymatic processing, targeting, and the membrane insertion of nascent chains at the exit of the ribosomal tunnel. As part of the LSU, it is probably required for its formation and the maturation of rRNAs. The sequence is that of Large ribosomal subunit protein eL13 (RpL13) from Spodoptera frugiperda (Fall armyworm).